The sequence spans 290 residues: ATP synthase gamma chain (290 aa).

This sequence belongs to the ATPase gamma chain family. As to quaternary structure, F-type ATPases have 2 components, CF(1) - the catalytic core - and CF(0) - the membrane proton channel. CF(1) has five subunits: alpha(3), beta(3), gamma(1), delta(1), epsilon(1). CF(0) has three main subunits: a, b and c.

Its subcellular location is the cell membrane. Its function is as follows. Produces ATP from ADP in the presence of a proton gradient across the membrane. The gamma chain is believed to be important in regulating ATPase activity and the flow of protons through the CF(0) complex. This chain is ATP synthase gamma chain, found in Buchnera aphidicola subsp. Schlechtendalia chinensis.